An 83-amino-acid polypeptide reads, in one-letter code: Large ribosomal subunit protein bL27 (83 aa).

Residues Met1–Tyr20 are disordered. Residues Ala7–Gln19 are compositionally biased toward polar residues.

Belongs to the bacterial ribosomal protein bL27 family.

This chain is Large ribosomal subunit protein bL27, found in Bifidobacterium animalis subsp. lactis (strain AD011).